A 298-amino-acid chain; its full sequence is Protoheme IX farnesyltransferase (298 aa).

9 consecutive transmembrane segments (helical) span residues valine 28–valine 48, leucine 50–isoleucine 70, leucine 95–alanine 117, proline 121–tyrosine 138, asparagine 149–threonine 169, alanine 176–valine 196, cysteine 222–methionine 242, threonine 243–tryptophan 263, and alanine 274–valine 294.

Belongs to the UbiA prenyltransferase family. Protoheme IX farnesyltransferase subfamily.

Its subcellular location is the cell inner membrane. The catalysed reaction is heme b + (2E,6E)-farnesyl diphosphate + H2O = Fe(II)-heme o + diphosphate. It functions in the pathway porphyrin-containing compound metabolism; heme O biosynthesis; heme O from protoheme: step 1/1. Its function is as follows. Converts heme B (protoheme IX) to heme O by substitution of the vinyl group on carbon 2 of heme B porphyrin ring with a hydroxyethyl farnesyl side group. The chain is Protoheme IX farnesyltransferase from Idiomarina loihiensis (strain ATCC BAA-735 / DSM 15497 / L2-TR).